A 233-amino-acid polypeptide reads, in one-letter code: UPF0173 metal-dependent hydrolase Acid345_3437 (233 aa).

Belongs to the UPF0173 family.

This chain is UPF0173 metal-dependent hydrolase Acid345_3437, found in Koribacter versatilis (strain Ellin345).